Reading from the N-terminus, the 134-residue chain is Urease subunit beta (134 aa).

Belongs to the urease beta subunit family. In terms of assembly, heterotrimer of UreA (gamma), UreB (beta) and UreC (alpha) subunits. Three heterotrimers associate to form the active enzyme.

Its subcellular location is the cytoplasm. The enzyme catalyses urea + 2 H2O + H(+) = hydrogencarbonate + 2 NH4(+). Its pathway is nitrogen metabolism; urea degradation; CO(2) and NH(3) from urea (urease route): step 1/1. In Staphylococcus saprophyticus subsp. saprophyticus (strain ATCC 15305 / DSM 20229 / NCIMB 8711 / NCTC 7292 / S-41), this protein is Urease subunit beta.